The following is a 110-amino-acid chain: Circadian clock oscillator protein KaiB (110 aa).

Belongs to the KaiB family. As to quaternary structure, the KaiABC complex composition changes during the circadian cycle to control KaiC phosphorylation. Complexes KaiC(6), KaiA(2-4):KaiC(6), KaiB(6):KaiC(6) and KaiC(6):KaiB(6):KaiA(12) are among the most important forms, many form cooperatively. Undergoes a major conformational rearrangment; in the free state forms homotetramers as a dimer of dimers. When bound to the CI domain of KaiC switches to a monomeric thioredoxin-fold (KaiB(fs)). KaiB(fs) binds CikA, leading it to dephosphorylate phospho-RpaA.

In terms of biological role, key component of the KaiABC oscillator complex, which constitutes the main circadian regulator in cyanobacteria. Complex composition changes during the circadian cycle to control KaiC phosphorylation. KaiA stimulates KaiC autophosphorylation, while KaiB sequesters KaiA, leading to KaiC autodephosphorylation. Phospho-Ser-431 KaiC accumulation triggers binding of KaiB to form the KaiB(6):KaiC(6) complex, leading to changes in output regulators CikA and SasA. KaiB switches to a thioredoxin-like fold (KaiB(fs)) when bound to KaiC. KaiB(6):KaiC(6) formation exposes a site for KaiA binding that sequesters KaiA from KaiC, making the KaiC(6):KaiB(6):KaiA(12) complex that results in KaiC autodephosphorylation. Functionally, a metamorphic protein which reversibly switches between an inactive tetrameric fold and a rare, thioredoxin-like monomeric fold (KaiB(fs)). KaiB(fs) binds phospho-KaiC, KaiA and CikA. KaiA and CikA compete for binding to KaiB(fs), and KaiB(fs) and SasA compete for binding to KaiC, thus the clock oscillator and output signal pathway are tightly coupled. This is Circadian clock oscillator protein KaiB from Synechococcus sp. (strain RCC307).